The chain runs to 107 residues: U1-lycotoxin-Ls1s (107 aa).

Positions 1–20 (MMKVLVVVALLVTLISYSSS) are cleaved as a signal peptide. The propeptide occupies 21–41 (EGIDDLEADELLSLMANEQTR). 4 disulfides stabilise this stretch: Cys-44/Cys-59, Cys-51/Cys-68, Cys-58/Cys-86, and Cys-70/Cys-84.

It belongs to the neurotoxin 19 (CSTX) family. 04 (U1-Lctx) subfamily. As to expression, expressed by the venom gland.

The protein resides in the secreted. The chain is U1-lycotoxin-Ls1s from Lycosa singoriensis (Wolf spider).